The following is a 326-amino-acid chain: Organic solute transporter subunit alpha (326 aa).

Topologically, residues 1–28 (METSNFTLFDPRCRAEAPFAIDAIKQLD) are extracellular. The N-linked (GlcNAc...) asparagine glycan is linked to asparagine 5. A helical transmembrane segment spans residues 29–49 (IFGKVLYTVLTLMATASMLVF). Over 50–67 (IEECIYIYKKVPAHKKST) the chain is Cytoplasmic. The helical transmembrane segment at 68–88 (IIWVTGVAPVMAIMSCLGMWV) threads the bilayer. Topologically, residues 89–99 (PRATMFTDMTS) are extracellular. A helical membrane pass occupies residues 100–120 (ATYFAIVVFKFLILMIEEVGG). At 121-161 (DNAFLRRCEKQTFKISTGPCCCCCPCLPNVPITRRSLFILK) the chain is on the cytoplasmic side. A helical membrane pass occupies residues 162–182 (LGSYQFALMKLVLTIFSIVLW). Topologically, residues 183–198 (TNGSFSLTNVSASGAA) are extracellular. N-linked (GlcNAc...) asparagine glycans are attached at residues asparagine 184 and asparagine 191. A helical membrane pass occupies residues 199-219 (IWINSFIGVLTIIALWPVAIM). At 220-237 (FMHVREALRTLKIVPKYA) the chain is on the cytoplasmic side. Residues 238-258 (MYQLVLILSQLQTAIINILAL) traverse the membrane as a helical segment. Asparagine 259 is a glycosylation site (N-linked (GlcNAc...) asparagine). Over 259-275 (NGTIACSPPYSSQARGY) the chain is Extracellular. The chain crosses the membrane as a helical span at residues 276–296 (MMSQQLLIVEMFIITLVTRVL). Over 297–326 (YRRQYEPIPEPDDVEEKKTVLSSKKAIDVA) the chain is Cytoplasmic.

Belongs to the OST-alpha family. As to quaternary structure, interacts with slc51b. The Ost-alpha/Ost-beta complex is a heterodimer composed of alpha (slc51a) and beta (slc51b) subunit.

The protein resides in the cell membrane. Its subcellular location is the endoplasmic reticulum membrane. The catalysed reaction is taurocholate(out) = taurocholate(in). The enzyme catalyses prostaglandin E2(out) = prostaglandin E2(in). It catalyses the reaction estrone 3-sulfate(out) = estrone 3-sulfate(in). It carries out the reaction dehydroepiandrosterone 3-sulfate(out) = dehydroepiandrosterone 3-sulfate(in). The catalysed reaction is tauroursodeoxycholate(out) = tauroursodeoxycholate(in). The enzyme catalyses glycoursodeoxycholate(out) = glycoursodeoxycholate(in). It catalyses the reaction glycocholate(out) = glycocholate(in). It carries out the reaction taurochenodeoxycholate(out) = taurochenodeoxycholate(in). The catalysed reaction is glycochenodeoxycholate(out) = glycochenodeoxycholate(in). The enzyme catalyses taurodeoxycholate(out) = taurodeoxycholate(in). It catalyses the reaction glycodeoxycholate(out) = glycodeoxycholate(in). Functionally, essential component of the Ost-alpha/Ost-beta complex, a heterodimer that acts as the intestinal basolateral transporter responsible for the translocation of bile acids (such as taurocholate), steroids (such as estrone sulfate), and eicosanoids (such as prostaglandin E2). In Danio rerio (Zebrafish), this protein is Organic solute transporter subunit alpha (slc51a).